We begin with the raw amino-acid sequence, 697 residues long: Elongation factor G 2 (697 aa).

One can recognise a tr-type G domain in the interval 5-280 (SLYRNIGIFA…AVVDYLPSPT (276 aa)). Residues 14 to 21 (AHVDAGKT), 78 to 82 (DTPGH), and 132 to 135 (NKLD) each bind GTP.

Belongs to the TRAFAC class translation factor GTPase superfamily. Classic translation factor GTPase family. EF-G/EF-2 subfamily.

The protein localises to the cytoplasm. Its function is as follows. Catalyzes the GTP-dependent ribosomal translocation step during translation elongation. During this step, the ribosome changes from the pre-translocational (PRE) to the post-translocational (POST) state as the newly formed A-site-bound peptidyl-tRNA and P-site-bound deacylated tRNA move to the P and E sites, respectively. Catalyzes the coordinated movement of the two tRNA molecules, the mRNA and conformational changes in the ribosome. The polypeptide is Elongation factor G 2 (Saccharophagus degradans (strain 2-40 / ATCC 43961 / DSM 17024)).